Reading from the N-terminus, the 340-residue chain is Phosphoribosylformylglycinamidine cyclo-ligase (340 aa).

The protein belongs to the AIR synthase family.

It is found in the cytoplasm. The enzyme catalyses 2-formamido-N(1)-(5-O-phospho-beta-D-ribosyl)acetamidine + ATP = 5-amino-1-(5-phospho-beta-D-ribosyl)imidazole + ADP + phosphate + H(+). It participates in purine metabolism; IMP biosynthesis via de novo pathway; 5-amino-1-(5-phospho-D-ribosyl)imidazole from N(2)-formyl-N(1)-(5-phospho-D-ribosyl)glycinamide: step 2/2. In Streptococcus agalactiae serotype III (strain NEM316), this protein is Phosphoribosylformylglycinamidine cyclo-ligase.